We begin with the raw amino-acid sequence, 479 residues long: Ribulose bisphosphate carboxylase large chain 2 (479 aa).

Positions 116 and 166 each coordinate substrate. Residue Lys-168 is the Proton acceptor of the active site. A substrate-binding site is contributed by Lys-170. Mg(2+)-binding residues include Lys-194, Asp-196, and Glu-197. The residue at position 194 (Lys-194) is an N6-carboxylysine. His-287 functions as the Proton acceptor in the catalytic mechanism. Substrate contacts are provided by Arg-288, His-320, and Ser-372.

This sequence belongs to the RuBisCO large chain family. Type I subfamily. As to quaternary structure, heterohexadecamer of 8 large chains and 8 small chains. Mg(2+) serves as cofactor.

It carries out the reaction 2 (2R)-3-phosphoglycerate + 2 H(+) = D-ribulose 1,5-bisphosphate + CO2 + H2O. The enzyme catalyses D-ribulose 1,5-bisphosphate + O2 = 2-phosphoglycolate + (2R)-3-phosphoglycerate + 2 H(+). Functionally, ruBisCO catalyzes two reactions: the carboxylation of D-ribulose 1,5-bisphosphate, the primary event in carbon dioxide fixation, as well as the oxidative fragmentation of the pentose substrate. Both reactions occur simultaneously and in competition at the same active site. In Bradyrhizobium sp. (strain ORS 278), this protein is Ribulose bisphosphate carboxylase large chain 2.